Consider the following 413-residue polypeptide: Sensor protein SphS (413 aa).

A Histidine kinase domain is found at 176-398; the sequence is DVAHELKTPL…WLRVQLPQEP (223 aa). His179 bears the Phosphohistidine; by autocatalysis mark.

The protein resides in the cytoplasm. The enzyme catalyses ATP + protein L-histidine = ADP + protein N-phospho-L-histidine.. Member of the two-component regulatory system SphR/SphS. Sensory kinase. Is involved in inducible production of alkaline phosphatase in response to phosphate limitation as it is directly involved in the regulation of phoA transcription in response to phosphate limitation. SphS functions as a protein kinase that phosphorylates SphR. The polypeptide is Sensor protein SphS (sphS) (Synechococcus elongatus (strain ATCC 33912 / PCC 7942 / FACHB-805) (Anacystis nidulans R2)).